A 208-amino-acid polypeptide reads, in one-letter code: Small ribosomal subunit protein uS4 (208 aa).

Residues L32–D53 are disordered. Positions L99 to L161 constitute an S4 RNA-binding domain.

It belongs to the universal ribosomal protein uS4 family. Part of the 30S ribosomal subunit. Contacts protein S5. The interaction surface between S4 and S5 is involved in control of translational fidelity.

Its function is as follows. One of the primary rRNA binding proteins, it binds directly to 16S rRNA where it nucleates assembly of the body of the 30S subunit. With S5 and S12 plays an important role in translational accuracy. This is Small ribosomal subunit protein uS4 from Endomicrobium trichonymphae.